The sequence spans 101 residues: Small ribosomal subunit protein uS14 (101 aa).

This sequence belongs to the universal ribosomal protein uS14 family. As to quaternary structure, part of the 30S ribosomal subunit. Contacts proteins S3 and S10.

In terms of biological role, binds 16S rRNA, required for the assembly of 30S particles and may also be responsible for determining the conformation of the 16S rRNA at the A site. This chain is Small ribosomal subunit protein uS14, found in Acinetobacter baylyi (strain ATCC 33305 / BD413 / ADP1).